Reading from the N-terminus, the 175-residue chain is Co-chaperone protein HscB homolog (175 aa).

The J domain occupies 7 to 79; sequence SHFDLFDLPA…LKRATYLLHL (73 aa).

The protein belongs to the HscB family. As to quaternary structure, interacts with HscA and stimulates its ATPase activity.

Its function is as follows. Co-chaperone involved in the maturation of iron-sulfur cluster-containing proteins. Seems to help targeting proteins to be folded toward HscA. This is Co-chaperone protein HscB homolog from Paraburkholderia phytofirmans (strain DSM 17436 / LMG 22146 / PsJN) (Burkholderia phytofirmans).